The chain runs to 256 residues: Protein FixA (256 aa).

It belongs to the ETF beta-subunit/FixA family. As to quaternary structure, heterodimer of FixA and FixB.

It functions in the pathway amine and polyamine metabolism; carnitine metabolism. Required for anaerobic carnitine reduction. May bring reductant to CaiA. The chain is Protein FixA from Shigella flexneri serotype 5b (strain 8401).